The sequence spans 275 residues: Undecaprenyl-diphosphatase (275 aa).

Transmembrane regions (helical) follow at residues L2 to I22, F43 to Y63, W83 to L103, L111 to I131, T147 to G167, Y186 to L206, L221 to I241, and A255 to H275.

This sequence belongs to the UppP family.

It localises to the cell membrane. It catalyses the reaction di-trans,octa-cis-undecaprenyl diphosphate + H2O = di-trans,octa-cis-undecaprenyl phosphate + phosphate + H(+). Its function is as follows. Catalyzes the dephosphorylation of undecaprenyl diphosphate (UPP). Confers resistance to bacitracin. This is Undecaprenyl-diphosphatase from Lactiplantibacillus plantarum (strain ATCC BAA-793 / NCIMB 8826 / WCFS1) (Lactobacillus plantarum).